The chain runs to 74 residues: Small ribosomal subunit protein bS18 (74 aa).

This sequence belongs to the bacterial ribosomal protein bS18 family. In terms of assembly, part of the 30S ribosomal subunit. Forms a tight heterodimer with protein bS6.

Binds as a heterodimer with protein bS6 to the central domain of the 16S rRNA, where it helps stabilize the platform of the 30S subunit. The polypeptide is Small ribosomal subunit protein bS18 (Natranaerobius thermophilus (strain ATCC BAA-1301 / DSM 18059 / JW/NM-WN-LF)).